A 228-amino-acid chain; its full sequence is Endo-1,4-beta-xylanase A (228 aa).

The N-terminal stretch at 1-27 is a signal peptide; it reads MNLRKLRLLFVMCIGLTLILTAVPAHA. The GH11 domain maps to 29-222; it reads TITNNEMGNH…SSGSANVMTN (194 aa). Catalysis depends on Glu120, which acts as the Nucleophile. Glu209 (proton donor) is an active-site residue.

It belongs to the glycosyl hydrolase 11 (cellulase G) family.

The catalysed reaction is Endohydrolysis of (1-&gt;4)-beta-D-xylosidic linkages in xylans.. Its pathway is glycan degradation; xylan degradation. The polypeptide is Endo-1,4-beta-xylanase A (xynA) (Bacillus pumilus (Bacillus mesentericus)).